Reading from the N-terminus, the 36-residue chain is Mating hormone A-factor 1 (36 aa).

Residues 1–21 (MQPSTATAAPKEKTSSEKKDN) constitute a propeptide that is removed on maturation. A Cysteine methyl ester modification is found at Cys-33. A lipid anchor (S-farnesyl cysteine) is attached at Cys-33. A propeptide spans 34–36 (VIA) (removed in mature form).

The protein localises to the cell membrane. Functionally, the active factor is excreted into the culture medium by haploid cells of the A mating type and acts on cells of the opposite mating type (type alpha). It mediates the conjugation process between the two types by inhibiting the initiation of DNA synthesis in type alpha cells and synchronizing them with type A. This is Mating hormone A-factor 1 (MFA1) from Saccharomyces cerevisiae (strain ATCC 204508 / S288c) (Baker's yeast).